The sequence spans 270 residues: MLRKVFYISDGTAITAEVFGHAVLSQFPLEFDALTIPFVETQEKAEAVKAQINDCFITTGERPLVFHSIVKAEIRDIIYSSEGLDYDFLNTFVAPLEKQLGVAAAPALHRTHGKANESYEARIDAINYAMENDDGQTMKHMDKADLILLGVSRCGKTPSSLYLSMQFGIKAANYPFTEDDMDNLKLPEALKRNKHKLFGLTIDPERLHEIRHSRMSNSRYSSLRQCRVEVKEVEMLYKKERIPYVNTTNHSVEEIATKILEETGLKRHMF.

Position 150-157 (150-157) interacts with ADP; sequence GVSRCGKT.

It belongs to the pyruvate, phosphate/water dikinase regulatory protein family. PSRP subfamily.

It catalyses the reaction [pyruvate, water dikinase] + ADP = [pyruvate, water dikinase]-phosphate + AMP + H(+). It carries out the reaction [pyruvate, water dikinase]-phosphate + phosphate + H(+) = [pyruvate, water dikinase] + diphosphate. Bifunctional serine/threonine kinase and phosphorylase involved in the regulation of the phosphoenolpyruvate synthase (PEPS) by catalyzing its phosphorylation/dephosphorylation. The polypeptide is Putative phosphoenolpyruvate synthase regulatory protein (Shewanella pealeana (strain ATCC 700345 / ANG-SQ1)).